The sequence spans 128 residues: Calcitonin gene-related peptide 1 (128 aa).

The first 25 residues, 1–25, serve as a signal peptide directing secretion; the sequence is MGFLKFSPFLVVSILLLYQACGLQA. Positions 26–80 are excised as a propeptide; the sequence is VPLRSTLESSPGMAATLSEEEARLLLAALVQNYMQMKVRELEQEQEAEGSSVTAQ. Cysteine 84 and cysteine 89 form a disulfide bridge. Phenylalanine 119 carries the phenylalanine amide modification. A propeptide spanning residues 125-128 is cleaved from the precursor; it reads DLQA.

Belongs to the calcitonin family.

It localises to the secreted. Its function is as follows. CGRP1/CALCA is a peptide hormone that induces vasodilation mediated by the CALCRL-RAMP1 receptor complex. Dilates a variety of vessels including the coronary, cerebral and systemic vasculature. Its abundance in the CNS also points toward a neurotransmitter or neuromodulator role. It also elevates platelet cAMP. CGRP1 can also bind and activate CALCR-RAMP1 (AMYR1) receptor complex. This is Calcitonin gene-related peptide 1 from Rattus norvegicus (Rat).